The following is a 138-amino-acid chain: Translation initiation factor 5A (138 aa).

Residue Lys42 is modified to Hypusine.

The protein belongs to the eIF-5A family.

The protein localises to the cytoplasm. Functions by promoting the formation of the first peptide bond. The chain is Translation initiation factor 5A (eif5a) from Pyrobaculum aerophilum (strain ATCC 51768 / DSM 7523 / JCM 9630 / CIP 104966 / NBRC 100827 / IM2).